We begin with the raw amino-acid sequence, 365 residues long: Carbamoyl phosphate synthase small chain (365 aa).

2 CPSase regions span residues 1 to 166 and 1 to 169; these read MKRQ…PSPG and MKRQ…GRGH. Positions 45, 218, and 220 each coordinate L-glutamine. Residues 170 to 357 form the Glutamine amidotransferase type-1 domain; that stretch reads RVVLVDFGMK…LTMIENFKKE (188 aa). Residue Cys-245 is the Nucleophile of the active site. The L-glutamine site is built by Leu-246, Gln-249, Asn-287, Gly-289, and Tyr-290. Residues His-330 and Glu-332 contribute to the active site.

It belongs to the CarA family. As to quaternary structure, composed of two chains; the small (or glutamine) chain promotes the hydrolysis of glutamine to ammonia, which is used by the large (or ammonia) chain to synthesize carbamoyl phosphate. Tetramer of heterodimers (alpha,beta)4.

It catalyses the reaction hydrogencarbonate + L-glutamine + 2 ATP + H2O = carbamoyl phosphate + L-glutamate + 2 ADP + phosphate + 2 H(+). The catalysed reaction is L-glutamine + H2O = L-glutamate + NH4(+). Its pathway is amino-acid biosynthesis; L-arginine biosynthesis; carbamoyl phosphate from bicarbonate: step 1/1. It participates in pyrimidine metabolism; UMP biosynthesis via de novo pathway; (S)-dihydroorotate from bicarbonate: step 1/3. Functionally, small subunit of the glutamine-dependent carbamoyl phosphate synthetase (CPSase). CPSase catalyzes the formation of carbamoyl phosphate from the ammonia moiety of glutamine, carbonate, and phosphate donated by ATP, constituting the first step of 2 biosynthetic pathways, one leading to arginine and/or urea and the other to pyrimidine nucleotides. The small subunit (glutamine amidotransferase) binds and cleaves glutamine to supply the large subunit with the substrate ammonia. This Bacillus anthracis protein is Carbamoyl phosphate synthase small chain.